The primary structure comprises 608 residues: DNA mismatch repair protein MutL (608 aa).

Belongs to the DNA mismatch repair MutL/HexB family.

This protein is involved in the repair of mismatches in DNA. It is required for dam-dependent methyl-directed DNA mismatch repair. May act as a 'molecular matchmaker', a protein that promotes the formation of a stable complex between two or more DNA-binding proteins in an ATP-dependent manner without itself being part of a final effector complex. The polypeptide is DNA mismatch repair protein MutL (Anaeromyxobacter dehalogenans (strain 2CP-C)).